The following is a 215-amino-acid chain: UPF0056 membrane protein YhcE (215 aa).

The next 6 helical transmembrane spans lie at 14 to 34 (FFIG…FISM), 54 to 74 (VAII…LFGI), 81 to 101 (IAGG…KLGE), 120 to 140 (VVPL…TIVW), 147 to 167 (ISYL…CWGL), and 189 to 209 (IMGL…IKGI).

Belongs to the UPF0056 (MarC) family.

It is found in the cell membrane. The polypeptide is UPF0056 membrane protein YhcE (ychE) (Escherichia coli (strain K12)).